We begin with the raw amino-acid sequence, 957 residues long: Glycine dehydrogenase (decarboxylating) (957 aa).

Lys-708 is subject to N6-(pyridoxal phosphate)lysine.

Belongs to the GcvP family. As to quaternary structure, the glycine cleavage system is composed of four proteins: P, T, L and H. Pyridoxal 5'-phosphate serves as cofactor.

The enzyme catalyses N(6)-[(R)-lipoyl]-L-lysyl-[glycine-cleavage complex H protein] + glycine + H(+) = N(6)-[(R)-S(8)-aminomethyldihydrolipoyl]-L-lysyl-[glycine-cleavage complex H protein] + CO2. The glycine cleavage system catalyzes the degradation of glycine. The P protein binds the alpha-amino group of glycine through its pyridoxal phosphate cofactor; CO(2) is released and the remaining methylamine moiety is then transferred to the lipoamide cofactor of the H protein. This is Glycine dehydrogenase (decarboxylating) from Salmonella dublin (strain CT_02021853).